The chain runs to 84 residues: Small ribosomal subunit protein bS16 (84 aa).

Belongs to the bacterial ribosomal protein bS16 family.

This chain is Small ribosomal subunit protein bS16, found in Deinococcus radiodurans (strain ATCC 13939 / DSM 20539 / JCM 16871 / CCUG 27074 / LMG 4051 / NBRC 15346 / NCIMB 9279 / VKM B-1422 / R1).